The sequence spans 88 residues: Mitochondrial import inner membrane translocase subunit Tim10 (88 aa).

The short motif at 29–54 (CHRKCVPPHYKEAELSKGEAVCLDRC) is the Twin CX3C motif element. Disulfide bonds link cysteine 29-cysteine 54 and cysteine 33-cysteine 50.

The protein belongs to the small Tim family. In terms of assembly, heterohexamer; composed of 3 copies of TIMM9 and 3 copies of TIMM10/TIM10A, named soluble 70 kDa complex. The complex forms a 6-bladed alpha-propeller structure and associates with the TIMM22 component of the TIM22 complex. Interacts with multi-pass transmembrane proteins in transit.

The protein resides in the mitochondrion inner membrane. Mitochondrial intermembrane chaperone that participates in the import and insertion of multi-pass transmembrane proteins into the mitochondrial inner membrane. May also be required for the transfer of beta-barrel precursors from the TOM complex to the sorting and assembly machinery (SAM complex) of the outer membrane. Acts as a chaperone-like protein that protects the hydrophobic precursors from aggregation and guide them through the mitochondrial intermembrane space. The polypeptide is Mitochondrial import inner membrane translocase subunit Tim10 (timm10) (Danio rerio (Zebrafish)).